We begin with the raw amino-acid sequence, 353 residues long: Ribosomal RNA large subunit methyltransferase M (353 aa).

S-adenosyl-L-methionine-binding positions include Ser179, 212-215 (APGG), Asp231, Asp251, and Asp267. Residue Lys296 is the Proton acceptor of the active site.

Belongs to the class I-like SAM-binding methyltransferase superfamily. RNA methyltransferase RlmE family. RlmM subfamily. In terms of assembly, monomer.

The protein resides in the cytoplasm. The enzyme catalyses cytidine(2498) in 23S rRNA + S-adenosyl-L-methionine = 2'-O-methylcytidine(2498) in 23S rRNA + S-adenosyl-L-homocysteine + H(+). Its function is as follows. Catalyzes the 2'-O-methylation at nucleotide C2498 in 23S rRNA. This Laribacter hongkongensis (strain HLHK9) protein is Ribosomal RNA large subunit methyltransferase M.